The sequence spans 285 residues: Probable endonuclease 4 (285 aa).

Residues His-67, His-107, Glu-144, Asp-177, His-180, His-214, Asp-227, His-229, and Glu-259 each contribute to the Zn(2+) site.

It belongs to the AP endonuclease 2 family. Requires Zn(2+) as cofactor.

It catalyses the reaction Endonucleolytic cleavage to 5'-phosphooligonucleotide end-products.. Its function is as follows. Endonuclease IV plays a role in DNA repair. It cleaves phosphodiester bonds at apurinic or apyrimidinic (AP) sites, generating a 3'-hydroxyl group and a 5'-terminal sugar phosphate. The sequence is that of Probable endonuclease 4 from Persephonella marina (strain DSM 14350 / EX-H1).